Reading from the N-terminus, the 598-residue chain is Leucine aminopeptidase 2, chloroplastic (598 aa).

The N-terminal 71 residues, M1–A71, are a transit peptide targeting the chloroplast. K367 and D372 together coordinate Mn(2+). The active site involves K379. Positions 392, 452, and 454 each coordinate Mn(2+). R456 is a catalytic residue.

The protein belongs to the peptidase M17 family. In terms of assembly, homohexamer (dimer of homotrimers). It depends on Mn(2+) as a cofactor.

The protein resides in the plastid. Its subcellular location is the chloroplast. The catalysed reaction is Release of an N-terminal amino acid, Xaa-|-Yaa-, in which Xaa is preferably Leu, but may be other amino acids including Pro although not Arg or Lys, and Yaa may be Pro. Amino acid amides and methyl esters are also readily hydrolyzed, but rates on arylamides are exceedingly low.. The enzyme catalyses Release of N-terminal proline from a peptide.. Presumably involved in the processing and regular turnover of intracellular proteins. Catalyzes the removal of unsubstituted N-terminal amino acids from various peptides. The sequence is that of Leucine aminopeptidase 2, chloroplastic from Oryza sativa subsp. japonica (Rice).